A 243-amino-acid chain; its full sequence is Proteasome subunit beta (243 aa).

The segment at 1 to 40 (MRTPMNNDISGRPDSLNGDRSDVFSPELGEFPNADDRAND) is disordered. Positions 1–49 (MRTPMNNDISGRPDSLNGDRSDVFSPELGEFPNADDRANDIGDMETKTG) are cleaved as a propeptide — removed in mature form; by autocatalysis. Catalysis depends on Thr-50, which acts as the Nucleophile.

This sequence belongs to the peptidase T1B family. The 20S proteasome core is composed of 14 alpha and 14 beta subunits that assemble into four stacked heptameric rings, resulting in a barrel-shaped structure. The two inner rings, each composed of seven catalytic beta subunits, are sandwiched by two outer rings, each composed of seven alpha subunits. The catalytic chamber with the active sites is on the inside of the barrel. Has a gated structure, the ends of the cylinder being occluded by the N-termini of the alpha-subunits. Is capped at one or both ends by the proteasome regulatory ATPase, PAN.

It localises to the cytoplasm. It carries out the reaction Cleavage of peptide bonds with very broad specificity.. The formation of the proteasomal ATPase PAN-20S proteasome complex, via the docking of the C-termini of PAN into the intersubunit pockets in the alpha-rings, triggers opening of the gate for substrate entry. Interconversion between the open-gate and close-gate conformations leads to a dynamic regulation of the 20S proteasome proteolysis activity. In terms of biological role, component of the proteasome core, a large protease complex with broad specificity involved in protein degradation. This chain is Proteasome subunit beta, found in Haloquadratum walsbyi (strain DSM 16790 / HBSQ001).